A 100-amino-acid chain; its full sequence is Urease subunit gamma (100 aa).

It belongs to the urease gamma subunit family. In terms of assembly, heterotrimer of UreA (gamma), UreB (beta) and UreC (alpha) subunits. Three heterotrimers associate to form the active enzyme.

It is found in the cytoplasm. It carries out the reaction urea + 2 H2O + H(+) = hydrogencarbonate + 2 NH4(+). It participates in nitrogen metabolism; urea degradation; CO(2) and NH(3) from urea (urease route): step 1/1. This is Urease subunit gamma from Granulibacter bethesdensis (strain ATCC BAA-1260 / CGDNIH1).